A 253-amino-acid chain; its full sequence is Hydroxyacylglutathione hydrolase (253 aa).

Histidine 54, histidine 56, aspartate 58, histidine 59, histidine 112, aspartate 131, and histidine 169 together coordinate Zn(2+).

Belongs to the metallo-beta-lactamase superfamily. Glyoxalase II family. As to quaternary structure, monomer. It depends on Zn(2+) as a cofactor.

It carries out the reaction an S-(2-hydroxyacyl)glutathione + H2O = a 2-hydroxy carboxylate + glutathione + H(+). The protein operates within secondary metabolite metabolism; methylglyoxal degradation; (R)-lactate from methylglyoxal: step 2/2. Thiolesterase that catalyzes the hydrolysis of S-D-lactoyl-glutathione to form glutathione and D-lactic acid. The chain is Hydroxyacylglutathione hydrolase from Bartonella henselae (strain ATCC 49882 / DSM 28221 / CCUG 30454 / Houston 1) (Rochalimaea henselae).